Reading from the N-terminus, the 146-residue chain is ATP synthase epsilon chain (146 aa).

This sequence belongs to the ATPase epsilon chain family. In terms of assembly, F-type ATPases have 2 components, CF(1) - the catalytic core - and CF(0) - the membrane proton channel. CF(1) has five subunits: alpha(3), beta(3), gamma(1), delta(1), epsilon(1). CF(0) has three main subunits: a, b and c.

It localises to the cell membrane. Functionally, produces ATP from ADP in the presence of a proton gradient across the membrane. The sequence is that of ATP synthase epsilon chain from Lactobacillus delbrueckii subsp. bulgaricus (strain ATCC 11842 / DSM 20081 / BCRC 10696 / JCM 1002 / NBRC 13953 / NCIMB 11778 / NCTC 12712 / WDCM 00102 / Lb 14).